The following is a 450-amino-acid chain: Phosphoglucosamine mutase (450 aa).

Ser-101 functions as the Phosphoserine intermediate in the catalytic mechanism. The Mg(2+) site is built by Ser-101, Asp-240, Asp-242, and Asp-244. Residue Ser-101 is modified to Phosphoserine.

Belongs to the phosphohexose mutase family. Requires Mg(2+) as cofactor. Activated by phosphorylation.

The catalysed reaction is alpha-D-glucosamine 1-phosphate = D-glucosamine 6-phosphate. Functionally, catalyzes the conversion of glucosamine-6-phosphate to glucosamine-1-phosphate. The sequence is that of Phosphoglucosamine mutase from Streptococcus sanguinis (strain SK36).